The sequence spans 232 residues: Large ribosomal subunit protein uL1 (232 aa).

This sequence belongs to the universal ribosomal protein uL1 family. As to quaternary structure, part of the 50S ribosomal subunit.

Functionally, binds directly to 23S rRNA. The L1 stalk is quite mobile in the ribosome, and is involved in E site tRNA release. Protein L1 is also a translational repressor protein, it controls the translation of the L11 operon by binding to its mRNA. In Bacteroides fragilis (strain ATCC 25285 / DSM 2151 / CCUG 4856 / JCM 11019 / LMG 10263 / NCTC 9343 / Onslow / VPI 2553 / EN-2), this protein is Large ribosomal subunit protein uL1.